We begin with the raw amino-acid sequence, 179 residues long: ATP-dependent protease subunit HslV (179 aa).

Thr-8 is an active-site residue. Residues Ser-164, Cys-167, and Thr-170 each contribute to the Na(+) site.

Belongs to the peptidase T1B family. HslV subfamily. A double ring-shaped homohexamer of HslV is capped on each side by a ring-shaped HslU homohexamer. The assembly of the HslU/HslV complex is dependent on binding of ATP.

Its subcellular location is the cytoplasm. The enzyme catalyses ATP-dependent cleavage of peptide bonds with broad specificity.. With respect to regulation, allosterically activated by HslU binding. Functionally, protease subunit of a proteasome-like degradation complex believed to be a general protein degrading machinery. The sequence is that of ATP-dependent protease subunit HslV from Staphylococcus carnosus (strain TM300).